A 402-amino-acid chain; its full sequence is Caspase-1 (402 aa).

The CARD domain occupies 1 to 91 (MADKVLRAKR…YLAEILELQS (91 aa)). A propeptide spanning residues 1-118 (MADKVLRAKR…PFSSETKEKL (118 aa)) is cleaved from the precursor. Residues His236 and Cys284 contribute to the active site. A propeptide spanning residues 297 to 314 (SVGNSEEGFLTDAIFEDD) is cleaved from the precursor. Phosphoserine is present on Ser301.

It belongs to the peptidase C14A family. In terms of assembly, heterotetramer that consists of two anti-parallel arranged heterodimers, each one formed by a 20 kDa (Caspase-1 subunit p20) and a 10 kDa (Caspase-1 subunit p10) subunit. May be a component of the inflammasome, a protein complex which also includes PYCARD, CARD8 and NLRP2 and whose function would be the activation of pro-inflammatory caspases. Component of the AIM2 PANoptosome complex, a multiprotein complex that drives inflammatory cell death (PANoptosis). Both the p10 and p20 subunits interact with MEFV. Interacts with CARD17P/INCA and CARD18. Interacts with SERPINB1; this interaction regulates CASP1 activity. As to quaternary structure, heterotetramer that consists of two anti-parallel arranged heterodimers, each one formed by a 20 kDa (Caspase-1 subunit p20) and a 10 kDa (Caspase-1 subunit p10) subunit. Post-translationally, the two subunits are derived from the precursor sequence by an autocatalytic mechanism. Ubiquitinated via 'Lys-11'-linked polyubiquitination. Deubiquitinated by USP8.

It localises to the cytoplasm. The protein resides in the cell membrane. The enzyme catalyses Strict requirement for an Asp residue at position P1 and has a preferred cleavage sequence of Tyr-Val-Ala-Asp-|-.. Thiol protease involved in a variety of inflammatory processes by proteolytically cleaving other proteins, such as the precursors of the inflammatory cytokines interleukin-1 beta (IL1B) and interleukin 18 (IL18) as well as the pyroptosis inducer Gasdermin-D (GSDMD), into active mature peptides. Plays a key role in cell immunity as an inflammatory response initiator: once activated through formation of an inflammasome complex, it initiates a pro-inflammatory response through the cleavage of the two inflammatory cytokines IL1B and IL18, releasing the mature cytokines which are involved in a variety of inflammatory processes. Cleaves a tetrapeptide after an Asp residue at position P1. Also initiates pyroptosis, a programmed lytic cell death pathway, through cleavage of GSDMD. In contrast to cleavage of interleukin IL1B, recognition and cleavage of GSDMD is not strictly dependent on the consensus cleavage site but depends on an exosite interface on CASP1 that recognizes and binds the Gasdermin-D, C-terminal (GSDMD-CT) part. Cleaves and activates CASP7 in response to bacterial infection, promoting plasma membrane repair. Upon inflammasome activation, during DNA virus infection but not RNA virus challenge, controls antiviral immunity through the cleavage of CGAS, rendering it inactive. In apoptotic cells, cleaves SPHK2 which is released from cells and remains enzymatically active extracellularly. This Rattus norvegicus (Rat) protein is Caspase-1 (Casp1).